Consider the following 621-residue polypeptide: TOX high mobility group box family member 4 (621 aa).

2 disordered regions span residues 153–227 (LGLS…QKPV) and 305–333 (LDPA…ASIE). A Phosphothreonine modification is found at Thr-176. Residues Ser-178, Ser-181, and Ser-182 each carry the phosphoserine modification. The span at 183–193 (LHEDGVEDFRR) shows a compositional bias: basic and acidic residues. Basic residues predominate over residues 208-218 (KQKAPKKRKKK). A Nuclear localization signal motif is present at residues 213-218 (KKRKKK). Positions 223-291 (PQKPVSAYAL…EYLKALAAYK (69 aa)) form a DNA-binding region, HMG box. A compositionally biased stretch (pro residues) spans 307–319 (PAPPSQTPSPPPM). Position 313 is a phosphothreonine (Thr-313). Ser-315 is subject to Phosphoserine. Low complexity predominate over residues 320-333 (ATVDPASPAPASIE). The residue at position 481 (Arg-481) is an Asymmetric dimethylarginine. Polar residues predominate over residues 510–525 (PTVESSPERPMNNSPE). A disordered region spans residues 510–529 (PTVESSPERPMNNSPEAHTV). Ser-533, Ser-550, Ser-552, Ser-560, Ser-562, and Ser-567 each carry phosphoserine.

In terms of assembly, component of the PNUTS-PP1 phosphatase complex, composed of PPP1R10/PNUTS, TOX4, WDR82 and PPP1CA or PPP1CB or PPP1CC. Interacts with PPP1R10/PNUTS. Interacts with FOXO1 and CREB1 (increased by cAMP); FOXO1 and CREB1 are required for full induction of TOX4-dependent activity and the interactions are inhibited by insulin. Expressed in liver (at protein level).

It localises to the nucleus. The protein localises to the chromosome. In liver, recruited to target gene promoters following treatment with dexamethasone and cAMP. Binding is decreased in presence of insulin. Functionally, transcription factor that modulates cell fate reprogramming from the somatic state to the pluripotent and neuronal fate. In liver, controls the expression of hormone-regulated gluconeogenic genes such as G6PC1 and PCK1. This regulation is independent of the insulin receptor activation. Also acts as a regulatory component of protein phosphatase 1 (PP1) complexes. Component of the PNUTS-PP1 protein phosphatase complex, a PP1 complex that regulates RNA polymerase II transcription pause-release. PNUTS-PP1 also plays a role in the control of chromatin structure and cell cycle progression during the transition from mitosis into interphase. The sequence is that of TOX high mobility group box family member 4 from Homo sapiens (Human).